The chain runs to 293 residues: Phosphatidylglycerol--prolipoprotein diacylglyceryl transferase (293 aa).

The next 4 membrane-spanning stretches (helical) occupy residues Ile4–Phe24, Phe45–Ala65, Glu81–Phe101, and Ile115–Leu135. Residue Arg165 participates in a 1,2-diacyl-sn-glycero-3-phospho-(1'-sn-glycerol) binding. Transmembrane regions (helical) follow at residues Pro204 to Phe224, His231 to Ile249, and Ile262 to Ile282.

The protein belongs to the Lgt family.

The protein resides in the cell inner membrane. It catalyses the reaction L-cysteinyl-[prolipoprotein] + a 1,2-diacyl-sn-glycero-3-phospho-(1'-sn-glycerol) = an S-1,2-diacyl-sn-glyceryl-L-cysteinyl-[prolipoprotein] + sn-glycerol 1-phosphate + H(+). It functions in the pathway protein modification; lipoprotein biosynthesis (diacylglyceryl transfer). Catalyzes the transfer of the diacylglyceryl group from phosphatidylglycerol to the sulfhydryl group of the N-terminal cysteine of a prolipoprotein, the first step in the formation of mature lipoproteins. This Thermotoga petrophila (strain ATCC BAA-488 / DSM 13995 / JCM 10881 / RKU-1) protein is Phosphatidylglycerol--prolipoprotein diacylglyceryl transferase.